A 2524-amino-acid chain; its full sequence is Neurogenic locus notch homolog protein 1 (2524 aa).

A signal peptide spans Met1–Gly19. 4 consecutive EGF-like domains span residues Leu20–Gln57, Phe58–Leu99, Val102–Gln140, and Gln141–Lys177. At Leu20–Tyr1729 the chain is on the extracellular side. Cystine bridges form between Cys22–Cys35, Cys29–Cys45, Cys47–Cys56, Cys62–Cys74, Cys68–Cys87, Cys89–Cys98, Cys106–Cys117, Cys111–Cys128, Cys130–Cys139, Cys145–Cys156, Cys150–Cys165, Cys167–Cys176, Cys183–Cys194, Cys188–Cys203, Cys205–Cys214, Cys221–Cys232, Cys226–Cys242, Cys244–Cys253, Cys260–Cys271, Cys265–Cys280, Cys282–Cys291, Cys298–Cys311, Cys305–Cys320, Cys322–Cys331, Cys338–Cys349, Cys343–Cys358, Cys360–Cys369, Cys375–Cys386, Cys380–Cys397, Cys399–Cys408, Cys415–Cys428, Cys422–Cys437, and Cys439–Cys448. Residues Asp179 to Asp215 enclose the EGF-like 5; calcium-binding domain. The EGF-like 6 domain maps to Pro217 to Glu254. Thr231 is a glycosylation site (O-linked (Fuc...) threonine; alternate). Thr231 carries O-linked (GalNAc...) threonine; alternate glycosylation. Residues Asn256 to Thr292 form the EGF-like 7; calcium-binding domain. In terms of domain architecture, EGF-like 8; calcium-binding spans Asp294–Ser332. Residues Asn334–His370 form the EGF-like 9; calcium-binding domain. The region spanning Leu371 to Asn409 is the EGF-like 10 domain. An EGF-like 11; calcium-binding domain is found at Asp411 to Glu449. Positions 431 and 434 each coordinate Ca(2+). O-linked (Glc...) serine glycosylation is present at Ser434. Ca(2+) is bound by residues Asp451, Val452, and Glu454. The EGF-like 12; calcium-binding domain maps to Asp451–Glu487. Cystine bridges form between Cys455–Cys466, Cys460–Cys475, and Cys477–Cys486. Ser457 carries O-linked (Glc...) serine glycosylation. An N-linked (GlcNAc...) asparagine glycan is attached at Asn462. Thr465 carries O-linked (Fuc...) threonine glycosylation. Asp468 and Gln469 together coordinate Ca(2+). Residues Asn489, Ile490, and Glu492 each coordinate Ca(2+). The EGF-like 13; calcium-binding domain maps to Asn489–Gln525. Disulfide bonds link Cys493–Cys504, Cys498–Cys513, Cys515–Cys524, Cys531–Cys542, Cys536–Cys551, Cys553–Cys562, Cys569–Cys579, Cys574–Cys588, Cys590–Cys599, Cys606–Cys617, Cys611–Cys626, Cys628–Cys637, Cys644–Cys654, Cys649–Cys663, Cys665–Cys674, Cys681–Cys692, Cys686–Cys701, Cys703–Cys712, Cys719–Cys729, Cys724–Cys738, Cys740–Cys749, Cys756–Cys767, Cys761–Cys776, Cys778–Cys787, Cys794–Cys805, Cys799–Cys814, Cys816–Cys825, Cys832–Cys843, Cys837–Cys854, Cys856–Cys865, Cys872–Cys883, Cys877–Cys892, Cys894–Cys903, Cys910–Cys921, Cys915–Cys930, Cys932–Cys941, Cys948–Cys959, Cys953–Cys968, Cys970–Cys979, Cys986–Cys997, Cys991–Cys1006, Cys1008–Cys1017, Cys1024–Cys1035, Cys1029–Cys1044, Cys1046–Cys1055, Cys1062–Cys1073, Cys1067–Cys1082, Cys1084–Cys1093, Cys1100–Cys1121, Cys1115–Cys1130, Cys1132–Cys1141, Cys1148–Cys1159, Cys1153–Cys1168, Cys1170–Cys1179, Cys1186–Cys1197, Cys1191–Cys1206, Cys1208–Cys1217, Cys1224–Cys1243, Cys1237–Cys1252, Cys1254–Cys1263, Cys1270–Cys1283, Cys1275–Cys1292, Cys1294–Cys1303, Cys1310–Cys1321, Cys1315–Cys1333, Cys1335–Cys1344, Cys1351–Cys1362, Cys1356–Cys1371, Cys1373–Cys1382, Cys1390–Cys1401, Cys1395–Cys1412, Cys1414–Cys1423, Cys1447–Cys1470, Cys1452–Cys1465, and Cys1461–Cys1477. An O-linked (Glc...) serine glycan is attached at Ser495. Ca(2+) is bound by residues Asp506 and Lys507. The EGF-like 14; calcium-binding domain maps to Asp527–Glu563. Residues Asp565–Asp600 form the EGF-like 15; calcium-binding domain. Residues Asp602–Glu638 enclose the EGF-like 16; calcium-binding domain. Residues Lys640–Asn675 form the EGF-like 17 domain. Residues Asn677–Leu713 form the EGF-like 18; calcium-binding domain. One can recognise an EGF-like 19; calcium-binding domain in the interval Glu715–Asp750. In terms of domain architecture, EGF-like 20; calcium-binding spans Asn752 to Gln788. Residues Asn790–Glu826 form the EGF-like 21; calcium-binding domain. The EGF-like 22 domain maps to Val828–Glu866. Residues Asp868–Glu904 form the EGF-like 23; calcium-binding domain. N-linked (GlcNAc...) asparagine glycosylation is present at Asn887. The EGF-like 24; calcium-binding domain maps to Asp906–Glu942. The 37-residue stretch at Asp944–Glu980 folds into the EGF-like 25; calcium-binding domain. N-linked (GlcNAc...) asparagine glycosylation occurs at Asn958. In terms of domain architecture, EGF-like 26 spans Asn982 to Gln1018. The EGF-like 27; calcium-binding domain occupies Asp1020–Gln1056. 2 EGF-like domains span residues Leu1058–Asp1094 and Pro1096–Glu1142. One can recognise an EGF-like 30; calcium-binding domain in the interval Gln1144–Ser1180. A glycan (N-linked (GlcNAc...) asparagine) is linked at Asn1178. The EGF-like 31; calcium-binding domain maps to Glu1182–Glu1218. The EGF-like 32; calcium-binding domain maps to Asn1220 to Glu1264. 4 EGF-like domains span residues Asp1266–Glu1304, Val1306–Tyr1346, Asp1347–Gln1383, and Val1386–His1424. A glycan (O-linked (Fuc...) threonine; alternate) is linked at Thr1400. Residue Thr1400 is glycosylated (O-linked (GalNAc...) threonine; alternate). 3 LNR repeats span residues Cys1447–Asn1487, Cys1488–Leu1529, and Tyr1530–Glu1564. A glycan (N-linked (GlcNAc...) asparagine) is linked at Asn1487. 5 disulfides stabilise this stretch: Cys1488-Cys1512, Cys1494-Cys1507, Cys1503-Cys1519, Cys1534-Cys1547, and Cys1543-Cys1559. Residue Asn1508 is glycosylated (N-linked (GlcNAc...) asparagine). Asn1584 is a glycosylation site (N-linked (GlcNAc...) asparagine). The helical transmembrane segment at Pro1730–Val1750 threads the bilayer. Over Asn1751–Lys2524 the chain is Cytoplasmic. 6 ANK repeats span residues Asp1876–Asn1919, Thr1924–Val1953, Met1957–Ala1987, Asp1991–Ala2020, Phe2024–Met2053, and Lys2057–Ile2086. 3 disordered regions span residues Asn2144–Leu2230, Met2369–Ser2407, and Leu2451–Lys2524. 2 stretches are compositionally biased toward polar residues: residues Gly2180–Val2192 and Asp2208–Leu2230. Residues Met2369–Ser2394 show a composition bias toward low complexity. Polar residues-rich tracts occupy residues Thr2395–Ser2407 and Leu2451–Leu2471. Residues Pro2481–Ser2496 show a composition bias toward low complexity. Positions Asn2497–Arg2516 are enriched in polar residues.

Belongs to the NOTCH family. In terms of assembly, forms a ternary complex with nrarp and rbpj/suh. In terms of processing, O-glycosylated on the EGF-like domains. Contains both O-linked fucose and O-linked glucose. O-linked glycosylation by galnt11 is involved in determination of left/right symmetry: glycosylation promotes activation of notch1, possibly by promoting cleavage by adam17, modulating the balance between motile and immotile (sensory) cilia at the left-right organiser (LRO). Synthesized in the endoplasmic reticulum as an inactive form which is proteolytically cleaved by a furin-like convertase in the trans-Golgi network before it reaches the plasma membrane to yield an active, ligand-accessible form. Cleavage results in a C-terminal fragment N(TM) and a N-terminal fragment N(EC). Following ligand binding, it is cleaved by adam17 to yield a membrane-associated intermediate fragment called notch extracellular truncation (NEXT). Following endocytosis, this fragment is then cleaved by presenilin dependent gamma-secretase to release a Notch-derived peptide containing the intracellular domain (NICD) from the membrane.

Its subcellular location is the cell membrane. It is found in the nucleus. Functions as a receptor for membrane-bound ligands Jagged-1 (JAG1), Jagged-2 (JAG2) and Delta-1 (DLL1) to regulate cell-fate determination. Upon ligand activation through the released notch intracellular domain (NICD) it forms a transcriptional activator complex with RBPJ/RBPSUH and activates genes of the enhancer of split locus. Affects the implementation of differentiation, proliferation and apoptotic programs. Involved in angiogenesis; negatively regulates endothelial cell proliferation and migration and angiogenic sprouting. Involved in the maturation of both CD4(+) and CD8(+) cells in the thymus. Important for follicular differentiation and possibly cell fate selection within the follicle. During cerebellar development, functions as a receptor for neuronal DNER and is involved in the differentiation of Bergmann glia. Represses neuronal and myogenic differentiation. May play an essential role in postimplantation development, probably in some aspect of cell specification and/or differentiation. May be involved in mesoderm development, somite formation and neurogenesis. Involved in determination of left/right symmetry by modulating the balance between motile and immotile (sensory) cilia at the left-right organiser (LRO). The protein is Neurogenic locus notch homolog protein 1 (notch1) of Xenopus laevis (African clawed frog).